Here is a 150-residue protein sequence, read N- to C-terminus: Putative pre-16S rRNA nuclease (150 aa).

Belongs to the YqgF nuclease family.

It is found in the cytoplasm. Could be a nuclease involved in processing of the 5'-end of pre-16S rRNA. This is Putative pre-16S rRNA nuclease from Chlamydia abortus (strain DSM 27085 / S26/3) (Chlamydophila abortus).